The following is a 286-amino-acid chain: Energy-coupling factor transporter ATP-binding protein EcfA2 (286 aa).

The ABC transporter domain occupies 3-246; that stretch reads IRFDNVSYTY…KKKLADWHIG (244 aa). 40 to 47 contacts ATP; it reads GQTGSGKS.

The protein belongs to the ABC transporter superfamily. Energy-coupling factor EcfA family. Forms a stable energy-coupling factor (ECF) transporter complex composed of 2 membrane-embedded substrate-binding proteins (S component), 2 ATP-binding proteins (A component) and 2 transmembrane proteins (T component).

The protein resides in the cell membrane. Its function is as follows. ATP-binding (A) component of a common energy-coupling factor (ECF) ABC-transporter complex. Unlike classic ABC transporters this ECF transporter provides the energy necessary to transport a number of different substrates. This Staphylococcus aureus (strain USA300) protein is Energy-coupling factor transporter ATP-binding protein EcfA2.